The chain runs to 179 residues: Large ribosomal subunit protein uL6 (179 aa).

Belongs to the universal ribosomal protein uL6 family. Part of the 50S ribosomal subunit.

Its function is as follows. This protein binds to the 23S rRNA, and is important in its secondary structure. It is located near the subunit interface in the base of the L7/L12 stalk, and near the tRNA binding site of the peptidyltransferase center. The sequence is that of Large ribosomal subunit protein uL6 from Rippkaea orientalis (strain PCC 8801 / RF-1) (Cyanothece sp. (strain PCC 8801)).